Reading from the N-terminus, the 295-residue chain is Tyrosine recombinase XerC (295 aa).

The region spanning 1-85 (MLTALNRYWD…ALRRFLSFLV (85 aa)) is the Core-binding (CB) domain. The region spanning 106 to 285 (HLPKNMDGEQ…NFQHLAEVYD (180 aa)) is the Tyr recombinase domain. Residues R145, K169, H237, R240, and H263 contribute to the active site. The active-site O-(3'-phospho-DNA)-tyrosine intermediate is Y272.

Belongs to the 'phage' integrase family. XerC subfamily. As to quaternary structure, forms a cyclic heterotetrameric complex composed of two molecules of XerC and two molecules of XerD.

It localises to the cytoplasm. Site-specific tyrosine recombinase, which acts by catalyzing the cutting and rejoining of the recombining DNA molecules. The XerC-XerD complex is essential to convert dimers of the bacterial chromosome into monomers to permit their segregation at cell division. It also contributes to the segregational stability of plasmids. The polypeptide is Tyrosine recombinase XerC (Haemophilus influenzae (strain 86-028NP)).